The chain runs to 240 residues: Uridylate kinase (240 aa).

An ATP-binding site is contributed by 12-15; it reads KLSG. The interval 20–25 is involved in allosteric activation by GTP; the sequence is GDQGYG. G54 is a UMP binding site. ATP contacts are provided by G55 and R59. UMP is bound by residues D74 and 135–142; that span reads TGNPYFST. The ATP site is built by N163, Y169, and D172.

This sequence belongs to the UMP kinase family. As to quaternary structure, homohexamer.

It localises to the cytoplasm. It catalyses the reaction UMP + ATP = UDP + ADP. It functions in the pathway pyrimidine metabolism; CTP biosynthesis via de novo pathway; UDP from UMP (UMPK route): step 1/1. Allosterically activated by GTP. Inhibited by UTP. In terms of biological role, catalyzes the reversible phosphorylation of UMP to UDP. In Oceanobacillus iheyensis (strain DSM 14371 / CIP 107618 / JCM 11309 / KCTC 3954 / HTE831), this protein is Uridylate kinase.